The following is a 280-amino-acid chain: Myb family transcription factor PHL11 (280 aa).

The HTH myb-type domain maps to R20–Q80. Positions P51–R76 form a DNA-binding region, H-T-H motif. Residues L77–S98 are disordered. Residues A129–Q149 form a coiled coil region. The short motif at F142–E147 is the LHEQLE element.

The protein belongs to the MYB-CC family.

The protein resides in the nucleus. The polypeptide is Myb family transcription factor PHL11 (Arabidopsis thaliana (Mouse-ear cress)).